The chain runs to 406 residues: CMP-sialic acid transporter 2 (406 aa).

Topologically, residues 1–41 (MKNGMAECSVCRSRLVSPSSKAISRAYDNYNYKIRVSSKQR) are cytoplasmic. The chain crosses the membrane as a helical span at residues 42-62 (ALNVFLVVGDCMLVGLQPVLV). The Lumenal portion of the chain corresponds to 63–75 (YMSKVDGKFNFSP). Residues 76 to 96 (ISVNFLTEIAKVIFAMVMLLF) form a helical membrane-spanning segment. Over 97 to 148 (QARHQKVGEKPLLSLSTFVQAARNNMLLAVPAGLYAINNYLKFTMQLYFNPA) the chain is Cytoplasmic. A helical membrane pass occupies residues 149–169 (TVKMLSNLKVLVIAVLLKMIM). The Lumenal portion of the chain corresponds to 170–172 (KRR). A helical membrane pass occupies residues 173 to 193 (FSIIQWEALALLLIGISINQL). Over 194–201 (RSLPEGAT) the chain is Cytoplasmic. The chain crosses the membrane as a helical span at residues 202–222 (TVAVPIATGAYICTFIFVTVP). Topologically, residues 223–245 (SLASVYNEYALKSQYDTSIYLQN) are lumenal. A helical membrane pass occupies residues 246–266 (LFLYGYGAIFNFLGILGTVIY). Residues 267-282 (KGPGSFDILQGHSRAT) are Cytoplasmic-facing. A helical membrane pass occupies residues 283 to 303 (MFLILNNAAQGILSSFFFKYA). At 304–323 (DTILKKYSSTVATIFTGIAS) the chain is on the lumenal side. The chain crosses the membrane as a helical span at residues 324–344 (AALFGHILTMNFLLGISIVFI). Residues 345–406 (SMHQFFSPLS…SDDRVPLLPR (62 aa)) lie on the Cytoplasmic side of the membrane.

It belongs to the nucleotide-sugar transporter family. CMP-Sialate:CMP antiporter (TC 2.A.7.12) subfamily.

It is found in the golgi apparatus membrane. In terms of biological role, sugar transporter involved in the transport of CMP-sialic acid from the cytoplasm into the Golgi. This is CMP-sialic acid transporter 2 from Arabidopsis thaliana (Mouse-ear cress).